The chain runs to 456 residues: Hydroxymethylglutaryl-CoA synthase ERG13 (456 aa).

(3S)-3-hydroxy-3-methylglutaryl-CoA is bound at residue Ala-35. Glu-86 functions as the Proton donor/acceptor in the catalytic mechanism. (3S)-3-hydroxy-3-methylglutaryl-CoA contacts are provided by Cys-118, Asn-156, Thr-160, Ser-210, His-259, Lys-268, Asn-336, and Ser-370. Cys-118 functions as the Acyl-thioester intermediate in the catalytic mechanism. His-259 acts as the Proton donor/acceptor in catalysis.

It belongs to the thiolase-like superfamily. HMG-CoA synthase family.

The catalysed reaction is acetoacetyl-CoA + acetyl-CoA + H2O = (3S)-3-hydroxy-3-methylglutaryl-CoA + CoA + H(+). It functions in the pathway metabolic intermediate biosynthesis; (R)-mevalonate biosynthesis; (R)-mevalonate from acetyl-CoA: step 2/3. Functionally, hydroxymethylglutaryl-CoA synthase; part of the first module of ergosterol biosynthesis pathway that includes the early steps of the pathway, conserved across all eukaryotes, and which results in the formation of mevalonate from acetyl-coenzyme A (acetyl-CoA). ERG13 condenses acetyl-CoA with acetoacetyl-CoA to form hydroxymethylglutaryl-CoA (HMG-CoA). The first module starts with the action of the cytosolic acetyl-CoA acetyltransferase ERG10B that catalyzes the formation of acetoacetyl-CoA. The hydroxymethylglutaryl-CoA synthases ERG13 then condenses acetyl-CoA with acetoacetyl-CoA to form HMG-CoA. The rate-limiting step of the early module is the reduction to mevalonate by the 3-hydroxy-3-methylglutaryl-coenzyme A (HMG-CoA) reductases HMG1. The chain is Hydroxymethylglutaryl-CoA synthase ERG13 from Gibberella zeae (strain ATCC MYA-4620 / CBS 123657 / FGSC 9075 / NRRL 31084 / PH-1) (Wheat head blight fungus).